Here is a 381-residue protein sequence, read N- to C-terminus: cAMP-dependent protein kinase type I-alpha regulatory subunit (381 aa).

M1 is subject to N-acetylmethionine. A dimerization and phosphorylation region spans residues 1–135 (MESGSTAASE…AALAKAIEKN (135 aa)). Residue S3 is modified to Phosphoserine. The segment at 64-96 (QIQNLQKAGTRTDSREDEISPPPPNPVVKGRRR) is disordered. T75 is subject to Phosphothreonine. Residues S77 and S83 each carry the phosphoserine modification. Positions 96-100 (RRGAI) match the Pseudophosphorylation motif motif. Residue S101 is modified to Phosphoserine. 3',5'-cyclic AMP-binding positions include 137-254 (LFSH…SKVS), E202, R211, 255-381 (ILES…SLSV), E326, and R335. S258 is modified (phosphoserine).

This sequence belongs to the cAMP-dependent kinase regulatory chain family. As to quaternary structure, the inactive holoenzyme is composed of two regulatory chains and two catalytic chains. Activation by cAMP releases the two active catalytic monomers and the regulatory dimer. Interacts with PRKACA and PRKACB. PRKAR1A also interacts with RFC2; the complex may be involved in cell survival. Interacts with AKAP4. Interacts with RARA; the interaction occurs in the presence of cAMP or FSH and regulates RARA transcriptional activity. Interacts with the phosphorylated form of PJA2. Interacts with CBFA2T3. Interacts with PRKX; regulates this cAMP-dependent protein kinase. Interacts with smAKAP; this interaction may target PRKAR1A to the plasma membrane. Interacts with AICDA. Post-translationally, the pseudophosphorylation site binds to the substrate-binding region of the catalytic chain, resulting in the inhibition of its activity.

It is found in the cell membrane. Regulatory subunit of the cAMP-dependent protein kinases involved in cAMP signaling in cells. The chain is cAMP-dependent protein kinase type I-alpha regulatory subunit (PRKAR1A) from Pongo abelii (Sumatran orangutan).